A 326-amino-acid chain; its full sequence is Protein-arginine N-acetylglucosaminyltransferase NleB2 (326 aa).

UDP-N-acetyl-alpha-D-glucosamine-binding positions include 45–47 (QWF), tyrosine 69, and 216–219 (YLDM). The DXD motif motif lies at 218–220 (DMD). Aspartate 220 lines the Mn(2+) pocket. The Proton acceptor role is filled by glutamate 250. Mn(2+)-binding residues include asparagine 317 and serine 319. UDP-N-acetyl-alpha-D-glucosamine contacts are provided by residues serine 319 and 324 to 326 (SSW).

Belongs to the glycosyltransferase NleB family. Requires Mn(2+) as cofactor.

It is found in the secreted. The protein resides in the host cell. It catalyses the reaction L-arginyl-[protein] + UDP-N-acetyl-alpha-D-glucosamine = N(omega)-(N-acetyl-beta-D-glucosaminyl)-L-arginyl-[protein] + UDP + H(+). Functionally, protein-arginine N-acetylglucosaminyltransferase effector that catalyzes the transfer of a single N-acetylglucosamine (GlcNAc) to a conserved arginine residue of host target proteins. In contrast to NleB1, not able to disrupt TNF signaling in infected cells. Shows a lower enzymatic activity than NleB1. The chain is Protein-arginine N-acetylglucosaminyltransferase NleB2 from Escherichia coli O127:H6 (strain E2348/69 / EPEC).